A 736-amino-acid chain; its full sequence is NADPH--cytochrome P450 reductase (736 aa).

A topological domain (lumenal) is located at residue Met1. A helical membrane pass occupies residues 2–24; the sequence is AVSSSSDVIVLSVGIILAALYLF. Over 25–736 the chain is Cytoplasmic; the sequence is REQIFSAAKP…RNRLLLDVWS (712 aa). One can recognise a Flavodoxin-like domain in the interval 66 to 216; sequence IVIFYGSQTG…DYLEWKDGMW (151 aa). FMN contacts are provided by residues 72-77, 123-126, 165-174, and Asp200; these read SQTGTA, ATYG, and LGNKTYEHYN. Residues 269 to 546 enclose the FAD-binding FR-type domain; it reads KNPYPAPIIA…EGPRGAYKQG (278 aa). Arg289 is an NADP(+) binding site. FAD contacts are provided by residues 456-459, 474-476, Tyr480, and 495-498; these read RYYS, TVV, and GVGS. NADP(+) is bound by residues Thr577, 648–649, and 659–663; these read SR and KIYVQ. FAD is bound at residue Trp735.

It belongs to the NADPH--cytochrome P450 reductase family. This sequence in the N-terminal section; belongs to the flavodoxin family. The protein in the C-terminal section; belongs to the flavoprotein pyridine nucleotide cytochrome reductase family. Requires FAD as cofactor. The cofactor is FMN.

It localises to the endoplasmic reticulum membrane. The protein resides in the mitochondrion outer membrane. The protein localises to the cell membrane. It carries out the reaction 2 oxidized [cytochrome P450] + NADPH = 2 reduced [cytochrome P450] + NADP(+) + H(+). This enzyme is required for electron transfer from NADP to cytochrome P450 in microsomes. It can also provide electron transfer to heme oxygenase and cytochrome B5. Involved in ergosterol biosynthesis. The sequence is that of NADPH--cytochrome P450 reductase (CPR) from Phanerodontia chrysosporium (White-rot fungus).